The sequence spans 197 residues: Probable nicotinate-nucleotide adenylyltransferase (197 aa).

The protein belongs to the NadD family.

The enzyme catalyses nicotinate beta-D-ribonucleotide + ATP + H(+) = deamido-NAD(+) + diphosphate. The protein operates within cofactor biosynthesis; NAD(+) biosynthesis; deamido-NAD(+) from nicotinate D-ribonucleotide: step 1/1. Its function is as follows. Catalyzes the reversible adenylation of nicotinate mononucleotide (NaMN) to nicotinic acid adenine dinucleotide (NaAD). The sequence is that of Probable nicotinate-nucleotide adenylyltransferase from Bordetella pertussis (strain Tohama I / ATCC BAA-589 / NCTC 13251).